A 156-amino-acid chain; its full sequence is Arginine repressor (156 aa).

The protein belongs to the ArgR family.

The protein localises to the cytoplasm. It functions in the pathway amino-acid biosynthesis; L-arginine biosynthesis [regulation]. In terms of biological role, regulates arginine biosynthesis genes. The polypeptide is Arginine repressor (Aliivibrio fischeri (strain ATCC 700601 / ES114) (Vibrio fischeri)).